A 223-amino-acid polypeptide reads, in one-letter code: Alpha-enolase (223 aa).

Serine 8 provides a ligand contact to Mg(2+). Tyrosine 12 bears the Phosphotyrosine mark. Lysine 25 is subject to N6-acetyllysine. Residue glutamate 39 participates in substrate binding. Lysine 61 carries the N6-acetyllysine modification. Catalysis depends on glutamate 69, which acts as the Proton donor. Lysine 87 carries the post-translational modification N6-acetyllysine; alternate. Lysine 87 is subject to N6-malonyllysine; alternate. An N6-succinyllysine; alternate modification is found at lysine 87. Aspartate 99 and aspartate 119 together coordinate Mg(2+). A substrate-binding site is contributed by aspartate 119. An N6-acetyllysine mark is found at lysine 133 and lysine 141. Lysine 141 serves as the catalytic Proton acceptor. Substrate is bound by residues 168–171 (SHRS) and lysine 192. Residues 202 to 223 (YNQILRIEEELGSKSFRNPLAK) are required for interaction with PLG. An N6-acetyllysine; alternate modification is found at lysine 215. The residue at position 215 (lysine 215) is an N6-malonyllysine; alternate. Lysine 215 carries the post-translational modification N6-succinyllysine; alternate.

It belongs to the enolase family. In terms of assembly, mammalian enolase is composed of 3 isozyme subunits, alpha, beta and gamma, which can form homodimers or heterodimers which are cell-type and development-specific. ENO1 interacts with PLG in the neuronal plasma membrane and promotes its activation. The C-terminal lysine is required for this binding. Interacts with ENO4 and PGAM2. Interacts with CMTM6. Requires Mg(2+) as cofactor. In terms of processing, ISGylated. Lysine 2-hydroxyisobutyrylation (Khib) by p300/EP300 activates the phosphopyruvate hydratase activity.

The protein resides in the cytoplasm. It is found in the cell membrane. It carries out the reaction (2R)-2-phosphoglycerate = phosphoenolpyruvate + H2O. It participates in carbohydrate degradation; glycolysis; pyruvate from D-glyceraldehyde 3-phosphate: step 4/5. Glycolytic enzyme the catalyzes the conversion of 2-phosphoglycerate to phosphoenolpyruvate. In addition to glycolysis, involved in various processes such as growth control, hypoxia tolerance and allergic responses. May also function in the intravascular and pericellular fibrinolytic system due to its ability to serve as a receptor and activator of plasminogen on the cell surface of several cell-types such as leukocytes and neurons. Stimulates immunoglobulin production. This Mesocricetus auratus (Golden hamster) protein is Alpha-enolase.